The sequence spans 317 residues: Lipase 1 (317 aa).

The signal sequence occupies residues 1–18 (MLLKRLCFAALFSLSMVG). Cysteine 19 carries N-palmitoyl cysteine lipidation. Residue cysteine 19 is the site of S-diacylglycerol cysteine attachment. The region spanning 69-296 (PLLLIHGFGG…MEDVGHVPMV (228 aa)) is the AB hydrolase-1 domain. Histidine 74 is an active-site residue. Serine 142 acts as the Nucleophile in catalysis. Active-site charge relay system residues include glutamate 270 and histidine 292.

It is found in the cell outer membrane. It carries out the reaction a triacylglycerol + H2O = a diacylglycerol + a fatty acid + H(+). In Psychrobacter immobilis, this protein is Lipase 1 (lip1).